Consider the following 212-residue polypeptide: Thymidylate kinase (212 aa).

Gly-10–Thr-17 contributes to the ATP binding site.

It belongs to the thymidylate kinase family.

The catalysed reaction is dTMP + ATP = dTDP + ADP. Functionally, phosphorylation of dTMP to form dTDP in both de novo and salvage pathways of dTTP synthesis. The chain is Thymidylate kinase from Prochlorococcus marinus (strain MIT 9312).